Consider the following 227-residue polypeptide: 2,3-bisphosphoglycerate-dependent phosphoglycerate mutase (227 aa).

Residues 7–14, 20–21, R59, 86–89, K97, 113–114, and 182–183 each bind substrate; these read RHGFSEWN, TG, ERHY, RR, and GN. The Tele-phosphohistidine intermediate role is filled by H8. E86 serves as the catalytic Proton donor/acceptor.

Belongs to the phosphoglycerate mutase family. BPG-dependent PGAM subfamily. In terms of assembly, homodimer.

The catalysed reaction is (2R)-2-phosphoglycerate = (2R)-3-phosphoglycerate. It functions in the pathway carbohydrate degradation; glycolysis; pyruvate from D-glyceraldehyde 3-phosphate: step 3/5. Catalyzes the interconversion of 2-phosphoglycerate and 3-phosphoglycerate. This is 2,3-bisphosphoglycerate-dependent phosphoglycerate mutase from Actinobacillus pleuropneumoniae serotype 5b (strain L20).